Reading from the N-terminus, the 237-residue chain is tRNA1(Val) (adenine(37)-N6)-methyltransferase (237 aa).

The protein belongs to the methyltransferase superfamily. tRNA (adenine-N(6)-)-methyltransferase family.

The protein localises to the cytoplasm. The catalysed reaction is adenosine(37) in tRNA1(Val) + S-adenosyl-L-methionine = N(6)-methyladenosine(37) in tRNA1(Val) + S-adenosyl-L-homocysteine + H(+). Functionally, specifically methylates the adenine in position 37 of tRNA(1)(Val) (anticodon cmo5UAC). This Bacteroides fragilis (strain YCH46) protein is tRNA1(Val) (adenine(37)-N6)-methyltransferase.